The following is a 309-amino-acid chain: MTTFIPIIFSSLVVVIFVIGNFANGFIALVNSIEWFKRQKISFADQILTALAVSRVGLLWVLLLNWYSTVLNPAFYSVEVRTTAYNVWAVTGHFSNWLATSLSIFYLLKIANFSNLIFLHLKRRVKSVILVMLLGPLLFLACQLFMINMKEIVRTKEYEGNMTWKIKLRSAVYLSDATVTTLGNLVPFTLTLLCFLLLICSLCKHLKKMQLHGKGSQDPSTKVHIKVLQTVISFLLLCAIYFLSIMISVWSFGSLKNKPVFMFCKAMRFSYPSIHPFILIWGNKKLKQTFLSVLRQVRYWVKGEKPSSP.

Residues 1-2 (MT) are Extracellular-facing. The chain crosses the membrane as a helical span at residues 3-23 (TFIPIIFSSLVVVIFVIGNFA). Over 24–55 (NGFIALVNSIEWFKRQKISFADQILTALAVSR) the chain is Cytoplasmic. Residues 56-76 (VGLLWVLLLNWYSTVLNPAFY) traverse the membrane as a helical segment. Residues 77–100 (SVEVRTTAYNVWAVTGHFSNWLAT) lie on the Extracellular side of the membrane. Residues 101–121 (SLSIFYLLKIANFSNLIFLHL) traverse the membrane as a helical segment. Over 122 to 126 (KRRVK) the chain is Cytoplasmic. The chain crosses the membrane as a helical span at residues 127 to 147 (SVILVMLLGPLLFLACQLFMI). Residues 148-181 (NMKEIVRTKEYEGNMTWKIKLRSAVYLSDATVTT) lie on the Extracellular side of the membrane. An N-linked (GlcNAc...) asparagine glycan is attached at Asn-161. Residues 182–202 (LGNLVPFTLTLLCFLLLICSL) traverse the membrane as a helical segment. Residues 203-229 (CKHLKKMQLHGKGSQDPSTKVHIKVLQ) are Cytoplasmic-facing. Residues 230–250 (TVISFLLLCAIYFLSIMISVW) form a helical membrane-spanning segment. The Extracellular segment spans residues 251-259 (SFGSLKNKP). The helical transmembrane segment at 260–280 (VFMFCKAMRFSYPSIHPFILI) threads the bilayer. Over 281-309 (WGNKKLKQTFLSVLRQVRYWVKGEKPSSP) the chain is Cytoplasmic.

Belongs to the G-protein coupled receptor T2R family.

It localises to the membrane. Receptor that may play a role in the perception of bitterness and is gustducin-linked. May play a role in sensing the chemical composition of the gastrointestinal content. The activity of this receptor may stimulate alpha gustducin, mediate PLC-beta-2 activation and lead to the gating of TRPM5. In Pan troglodytes (Chimpanzee), this protein is Taste receptor type 2 member 31 (TAS2R31).